The sequence spans 333 residues: Homeobox protein engrailed-1 (333 aa).

Basic and acidic residues predominate over residues 1–14 (MEEPPEGHGHHRDA). Disordered stretches follow at residues 1–184 (MEEP…AAKY) and 226–247 (RPSS…DKRP). Over residues 20–31 (ANGGGGGGGGSD) the composition is skewed to gly residues. Residues 38–66 (SPSPAPASPAAPCPLPLPRRRPPPPPPPR) show a composition bias toward pro residues. The segment covering 94 to 104 (TGAGGGGGGGG) has biased composition (gly residues). Positions 144–173 (DGSAPAGTAAKANPGTAAGAAGAAGAAKAQ) are enriched in low complexity. Residues 244-303 (DKRPRTAFTAEQLQRLKAEFQANRYITEQRRQSLAQELSLNESRVKIWFQNKRAKIKKAT) constitute a DNA-binding region (homeobox).

It belongs to the engrailed homeobox family.

It localises to the nucleus. In terms of biological role, required for proper formation of the apical ectodermal ridge and correct dorsal-ventral patterning in the limb. This chain is Homeobox protein engrailed-1 (EN1), found in Gallus gallus (Chicken).